A 187-amino-acid polypeptide reads, in one-letter code: MSGGGTETPVGCEAAPGGGSKKRDSLGTAGSAHLIIKDLGEIHSRLLDHRPVIQGETRYFVKEFEEKRGLREMRVLENLKNMIHETNEHTLPKCRDTMRDSLSQVLQRLQAANDSVCRLQQREQERKKIHSDHLVASEKQHMLQWDNFMKEQPNKRAEVDEEHRKAMERLKEQYAEMEKDLAKFSTF.

The tract at residues 1–26 is disordered; the sequence is MSGGGTETPVGCEAAPGGGSKKRDSL. Residue Ser2 is modified to N-acetylserine. Positions 154–186 form a coiled coil; that stretch reads NKRAEVDEEHRKAMERLKEQYAEMEKDLAKFST.

It belongs to the BLOC1S5 family. In terms of assembly, interacts with BLOC1S4, DTNBP1/BLOC1S7 and PI4K2A. Component of the biogenesis of lysosome-related organelles complex 1 (BLOC-1) composed of BLOC1S1, BLOC1S2, BLOC1S3, BLOC1S4, BLOC1S5, BLOC1S6, DTNBP1/BLOC1S7 and SNAPIN/BLOC1S8. Octamer composed of one copy each BLOC1S1, BLOC1S2, BLOC1S3, BLOC1S4, BLOC1S5, BLOC1S6, DTNBP1/BLOC1S7 and SNAPIN/BLOC1S8. The BLOC-1 complex associates with the AP-3 protein complex and membrane protein cargos. Interacts with BLOC1S6.

Its function is as follows. Component of the BLOC-1 complex, a complex that is required for normal biogenesis of lysosome-related organelles (LRO), such as platelet dense granules and melanosomes. In concert with the AP-3 complex, the BLOC-1 complex is required to target membrane protein cargos into vesicles assembled at cell bodies for delivery into neurites and nerve terminals. The BLOC-1 complex, in association with SNARE proteins, is also proposed to be involved in neurite extension. Plays a role in intracellular vesicle trafficking. The sequence is that of Biogenesis of lysosome-related organelles complex 1 subunit 5 from Homo sapiens (Human).